The sequence spans 326 residues: Phospho-N-acetylmuramoyl-pentapeptide-transferase (326 aa).

A run of 10 helical transmembrane segments spans residues leucine 3 to isoleucine 23, threonine 51 to valine 71, isoleucine 77 to leucine 97, isoleucine 113 to glutamate 133, glycine 143 to serine 163, glycine 175 to threonine 195, isoleucine 199 to asparagine 219, isoleucine 225 to leucine 245, valine 250 to valine 270, and isoleucine 306 to leucine 326.

Belongs to the glycosyltransferase 4 family. MraY subfamily. The cofactor is Mg(2+).

The protein resides in the cell membrane. It catalyses the reaction UDP-N-acetyl-alpha-D-muramoyl-L-alanyl-gamma-D-glutamyl-meso-2,6-diaminopimeloyl-D-alanyl-D-alanine + di-trans,octa-cis-undecaprenyl phosphate = di-trans,octa-cis-undecaprenyl diphospho-N-acetyl-alpha-D-muramoyl-L-alanyl-D-glutamyl-meso-2,6-diaminopimeloyl-D-alanyl-D-alanine + UMP. It participates in cell wall biogenesis; peptidoglycan biosynthesis. Catalyzes the initial step of the lipid cycle reactions in the biosynthesis of the cell wall peptidoglycan: transfers peptidoglycan precursor phospho-MurNAc-pentapeptide from UDP-MurNAc-pentapeptide onto the lipid carrier undecaprenyl phosphate, yielding undecaprenyl-pyrophosphoryl-MurNAc-pentapeptide, known as lipid I. In Wolbachia sp. subsp. Brugia malayi (strain TRS), this protein is Phospho-N-acetylmuramoyl-pentapeptide-transferase.